The following is a 669-amino-acid chain: Protein BNIP5 (669 aa).

Disordered stretches follow at residues 1-116 (MPRS…REAQ), 131-259 (IEEP…QDDV), 273-401 (QLEE…RASE), and 413-544 (LQSA…SPER). Residues 34–47 (RSLDRQVPRKKDPE) are compositionally biased toward basic and acidic residues. Positions 48 to 73 (SSNTRCPSSATCRRTASDGARSSESP) are enriched in polar residues. Basic and acidic residues-rich tracts occupy residues 104-113 (EDTKKERLPR) and 131-148 (IEEP…KGDL). Residues 158–175 (RKKSHEKRTSRKKHSHRK) show a composition bias toward basic residues. Over residues 285–295 (EAVPPRKPTPL) the composition is skewed to pro residues. A Glycyl lysine isopeptide (Lys-Gly) (interchain with G-Cter in SUMO2) cross-link involves residue Lys314. A compositionally biased stretch (polar residues) spans 346 to 357 (VSSQRASTSSSL). A compositionally biased stretch (basic and acidic residues) spans 390–401 (PEEKPLLDRASE). The span at 445-462 (SQVKKSNLRRAFSLRKHS) shows a compositional bias: basic residues. Residues 516-528 (AAGGAPAGSPGAP) are compositionally biased toward low complexity.

This chain is Protein BNIP5 (Bnip5), found in Mus musculus (Mouse).